Here is a 188-residue protein sequence, read N- to C-terminus: uncharacterized protein (188 aa).

The L5-specific motif motif lies at 62–77 (ITGEKPLIKLNESTEK).

The protein localises to the mitochondrion. This is an uncharacterized protein from Dictyostelium discoideum (Social amoeba).